We begin with the raw amino-acid sequence, 197 residues long: Probable GTP-binding protein EngB (197 aa).

Residues 22-195 (NLPEIAFVGR…VDYLFDDLVE (174 aa)) enclose the EngB-type G domain. Residues 30-37 (GRSNVGKS), 57-61 (GKTRL), 75-78 (DLPG), 142-145 (TKSD), and 174-176 (FSS) contribute to the GTP site. Ser-37 and Thr-59 together coordinate Mg(2+).

Belongs to the TRAFAC class TrmE-Era-EngA-EngB-Septin-like GTPase superfamily. EngB GTPase family. The cofactor is Mg(2+).

In terms of biological role, necessary for normal cell division and for the maintenance of normal septation. In Clostridium perfringens (strain SM101 / Type A), this protein is Probable GTP-binding protein EngB.